A 317-amino-acid polypeptide reads, in one-letter code: tRNA dimethylallyltransferase (317 aa).

An ATP-binding site is contributed by 14–21 (GPTAVGKT). Substrate is bound at residue 16 to 21 (TAVGKT). An interaction with substrate tRNA region spans residues 39–42 (DSMQ).

It belongs to the IPP transferase family. In terms of assembly, monomer. Requires Mg(2+) as cofactor.

It catalyses the reaction adenosine(37) in tRNA + dimethylallyl diphosphate = N(6)-dimethylallyladenosine(37) in tRNA + diphosphate. Functionally, catalyzes the transfer of a dimethylallyl group onto the adenine at position 37 in tRNAs that read codons beginning with uridine, leading to the formation of N6-(dimethylallyl)adenosine (i(6)A). The protein is tRNA dimethylallyltransferase of Bacillus cereus (strain B4264).